The sequence spans 350 residues: Selenide, water dikinase (350 aa).

U15 is a catalytic residue. U15 is a non-standard amino acid (selenocysteine). ATP is bound by residues K18 and H47–E49. D50 contributes to the Mg(2+) binding site. ATP is bound by residues D67, D90, and G138–S140. D90 is a binding site for Mg(2+). Mg(2+) is bound at residue D227.

This sequence belongs to the selenophosphate synthase 1 family. Class I subfamily. Homodimer. Requires Mg(2+) as cofactor.

The catalysed reaction is hydrogenselenide + ATP + H2O = selenophosphate + AMP + phosphate + 2 H(+). In terms of biological role, synthesizes selenophosphate from selenide and ATP. This Nitratidesulfovibrio vulgaris (strain DSM 19637 / Miyazaki F) (Desulfovibrio vulgaris) protein is Selenide, water dikinase.